The sequence spans 108 residues: Phosphocarrier protein HPr (108 aa).

One can recognise an HPr domain in the interval 21 to 108; the sequence is ELQATCIVKN…DAFSSGFGEL (88 aa). The active-site Pros-phosphohistidine intermediate is the His-35.

It belongs to the HPr family.

The protein resides in the cytoplasm. In terms of biological role, general (non sugar-specific) component of the phosphoenolpyruvate-dependent sugar phosphotransferase system (sugar PTS). This major carbohydrate active-transport system catalyzes the phosphorylation of incoming sugar substrates concomitantly with their translocation across the cell membrane. The phosphoryl group from phosphoenolpyruvate (PEP) is transferred to the phosphoryl carrier protein HPr by enzyme I. Phospho-HPr then transfers it to the PTS EIIA domain. This Chlamydia pneumoniae (Chlamydophila pneumoniae) protein is Phosphocarrier protein HPr (ptsH).